The sequence spans 775 residues: Metal transporter CNNM4 (775 aa).

The Extracellular portion of the chain corresponds to 1-178 (MAPVGGGGRP…LLFMVEEPGR (178 aa)). Residues N85 and N122 are each glycosylated (N-linked (GlcNAc...) asparagine). One can recognise a CNNM transmembrane domain in the interval 178-358 (RFLPLWLHIL…EPYNDLVKEE (181 aa)). Residues 179-199 (FLPLWLHILLITVLLVLSGIF) traverse the membrane as a helical segment. Residues 200-240 (SGLNLGLMALDPMELRIVQNCGTEKERRYARKIEPIRRKGN) lie on the Cytoplasmic side of the membrane. Positions 241-261 (YLLCSLLLGNVLVNTSLTILL) form an intramembrane region, helical. Residues 262–264 (DNL) lie on the Cytoplasmic side of the membrane. Residues 265 to 285 (IGSGLMAVASSTIGIVIFGEI) traverse the membrane as a helical segment. Over 286–293 (LPQALCSR) the chain is Extracellular. Residues 294–316 (HGLAVGANTILLTKFFMLLTFPL) form a helical membrane-spanning segment. Residues 317-775 (SFPISKLLDF…LHKASHENAI (459 aa)) are Cytoplasmic-facing. CBS domains follow at residues 377-438 (MTQL…CTPL) and 445-511 (YNHP…ILDE). Phosphoserine occurs at positions 660, 664, and 770.

This sequence belongs to the ACDP family. As to quaternary structure, interacts with COX11. In terms of tissue distribution, widely expressed. Highly expressed in heart.

It localises to the cell membrane. Functionally, probable metal transporter. The interaction with the metal ion chaperone COX11 suggests that it may play a role in sensory neuron functions. May play a role in biomineralization and retinal function. This chain is Metal transporter CNNM4 (CNNM4), found in Homo sapiens (Human).